The sequence spans 612 residues: Elongation factor 4 (612 aa).

One can recognise a tr-type G domain in the interval 12–194 (SRIRNFSIIA…QIVEKVPAPS (183 aa)). GTP-binding positions include 24 to 29 (DHGKST) and 141 to 144 (NKID).

The protein belongs to the TRAFAC class translation factor GTPase superfamily. Classic translation factor GTPase family. LepA subfamily.

Its subcellular location is the cell membrane. It catalyses the reaction GTP + H2O = GDP + phosphate + H(+). Required for accurate and efficient protein synthesis under certain stress conditions. May act as a fidelity factor of the translation reaction, by catalyzing a one-codon backward translocation of tRNAs on improperly translocated ribosomes. Back-translocation proceeds from a post-translocation (POST) complex to a pre-translocation (PRE) complex, thus giving elongation factor G a second chance to translocate the tRNAs correctly. Binds to ribosomes in a GTP-dependent manner. The chain is Elongation factor 4 from Bacillus licheniformis (strain ATCC 14580 / DSM 13 / JCM 2505 / CCUG 7422 / NBRC 12200 / NCIMB 9375 / NCTC 10341 / NRRL NRS-1264 / Gibson 46).